A 350-amino-acid polypeptide reads, in one-letter code: Probable dual-specificity RNA methyltransferase RlmN (350 aa).

A Radical SAM core domain is found at 105–342; that stretch reads ANGKNSVCIS…VRQSKGANIN (238 aa). C112 and C345 form a disulfide bridge. [4Fe-4S] cluster-binding residues include C119, C123, and C126. Residues 166–167, S198, 221–223, and N302 contribute to the S-adenosyl-L-methionine site; these read GE and SLH. Residue C345 is the S-methylcysteine intermediate of the active site.

This sequence belongs to the radical SAM superfamily. RlmN family. It depends on [4Fe-4S] cluster as a cofactor.

It localises to the cytoplasm. The enzyme catalyses adenosine(2503) in 23S rRNA + 2 reduced [2Fe-2S]-[ferredoxin] + 2 S-adenosyl-L-methionine = 2-methyladenosine(2503) in 23S rRNA + 5'-deoxyadenosine + L-methionine + 2 oxidized [2Fe-2S]-[ferredoxin] + S-adenosyl-L-homocysteine. The catalysed reaction is adenosine(37) in tRNA + 2 reduced [2Fe-2S]-[ferredoxin] + 2 S-adenosyl-L-methionine = 2-methyladenosine(37) in tRNA + 5'-deoxyadenosine + L-methionine + 2 oxidized [2Fe-2S]-[ferredoxin] + S-adenosyl-L-homocysteine. Functionally, specifically methylates position 2 of adenine 2503 in 23S rRNA and position 2 of adenine 37 in tRNAs. This is Probable dual-specificity RNA methyltransferase RlmN from Endomicrobium trichonymphae.